A 303-amino-acid polypeptide reads, in one-letter code: Quinolinate synthase (303 aa).

Iminosuccinate contacts are provided by His24 and Ser41. Cys86 is a binding site for [4Fe-4S] cluster. Residues Tyr112–Asn114 and Ser129 each bind iminosuccinate. Cys172 contributes to the [4Fe-4S] cluster binding site. Residues His198–Glu200 and Thr215 contribute to the iminosuccinate site. Cys260 contacts [4Fe-4S] cluster.

Belongs to the quinolinate synthase family. Type 2 subfamily. [4Fe-4S] cluster serves as cofactor.

The protein localises to the cytoplasm. The enzyme catalyses iminosuccinate + dihydroxyacetone phosphate = quinolinate + phosphate + 2 H2O + H(+). It participates in cofactor biosynthesis; NAD(+) biosynthesis; quinolinate from iminoaspartate: step 1/1. Functionally, catalyzes the condensation of iminoaspartate with dihydroxyacetone phosphate to form quinolinate. This is Quinolinate synthase from Caldicellulosiruptor saccharolyticus (strain ATCC 43494 / DSM 8903 / Tp8T 6331).